The primary structure comprises 71 residues: uncharacterized protein (71 aa).

The protein localises to the mitochondrion matrix. It is found in the kinetoplast. This is an uncharacterized protein from Trypanosoma brucei brucei.